The sequence spans 304 residues: tRNA-uridine aminocarboxypropyltransferase 1 (304 aa).

Residues methionine 1–threonine 30 are disordered. The span at asparagine 15–threonine 30 shows a compositional bias: polar residues. The DXTW signature appears at aspartate 206–tryptophan 209.

The protein belongs to the TDD superfamily. DTWD1 family.

The protein localises to the nucleus. The enzyme catalyses a uridine in tRNA + S-adenosyl-L-methionine = a 3-[(3S)-3-amino-3-carboxypropyl]uridine in tRNA + S-methyl-5'-thioadenosine + H(+). Its function is as follows. Catalyzes the formation of 3-(3-amino-3-carboxypropyl)uridine (acp3U) at position 20 in the D-loop of several cytoplasmic tRNAs (acp3U(20)). This Rattus norvegicus (Rat) protein is tRNA-uridine aminocarboxypropyltransferase 1.